Reading from the N-terminus, the 360-residue chain is Phospho-N-acetylmuramoyl-pentapeptide-transferase (360 aa).

Helical transmembrane passes span 26–46 (AILG…ILIK), 73–93 (TMGG…WGDL), 97–117 (YVLV…IDDY), 135–155 (ALQS…STMV), 168–188 (IMPQ…VGAS), 199–219 (GLAI…AYLS), 236–256 (AGEL…FLWF), 263–283 (VFMG…IAIL), 288–308 (ILLV…ILQV), and 338–358 (VIVR…ATLK).

The protein belongs to the glycosyltransferase 4 family. MraY subfamily. Mg(2+) is required as a cofactor.

It localises to the cell inner membrane. The enzyme catalyses UDP-N-acetyl-alpha-D-muramoyl-L-alanyl-gamma-D-glutamyl-meso-2,6-diaminopimeloyl-D-alanyl-D-alanine + di-trans,octa-cis-undecaprenyl phosphate = di-trans,octa-cis-undecaprenyl diphospho-N-acetyl-alpha-D-muramoyl-L-alanyl-D-glutamyl-meso-2,6-diaminopimeloyl-D-alanyl-D-alanine + UMP. It functions in the pathway cell wall biogenesis; peptidoglycan biosynthesis. In terms of biological role, catalyzes the initial step of the lipid cycle reactions in the biosynthesis of the cell wall peptidoglycan: transfers peptidoglycan precursor phospho-MurNAc-pentapeptide from UDP-MurNAc-pentapeptide onto the lipid carrier undecaprenyl phosphate, yielding undecaprenyl-pyrophosphoryl-MurNAc-pentapeptide, known as lipid I. The chain is Phospho-N-acetylmuramoyl-pentapeptide-transferase from Shewanella frigidimarina (strain NCIMB 400).